The following is a 135-amino-acid chain: Large ribosomal subunit protein bL21 (135 aa).

The segment at 114-135 (EAEKETPVLDETPAEEVETAAE) is disordered. Residues 125–135 (TPAEEVETAAE) show a composition bias toward acidic residues.

The protein belongs to the bacterial ribosomal protein bL21 family. As to quaternary structure, part of the 50S ribosomal subunit. Contacts protein L20.

Functionally, this protein binds to 23S rRNA in the presence of protein L20. This Nostoc punctiforme (strain ATCC 29133 / PCC 73102) protein is Large ribosomal subunit protein bL21.